The chain runs to 466 residues: Phosphomethylpyrimidine synthase (466 aa).

Substrate is bound by residues Asn80, Met109, Tyr139, His175, 195-197, 236-239, and Glu275; these read SRG and DSLR. Residue His279 participates in Zn(2+) binding. Tyr302 is a substrate binding site. Position 343 (His343) interacts with Zn(2+). 3 residues coordinate [4Fe-4S] cluster: Cys423, Cys426, and Cys431.

This sequence belongs to the ThiC family. [4Fe-4S] cluster is required as a cofactor.

The enzyme catalyses 5-amino-1-(5-phospho-beta-D-ribosyl)imidazole + S-adenosyl-L-methionine = 4-amino-2-methyl-5-(phosphooxymethyl)pyrimidine + CO + 5'-deoxyadenosine + formate + L-methionine + 3 H(+). It participates in cofactor biosynthesis; thiamine diphosphate biosynthesis. Functionally, catalyzes the synthesis of the hydroxymethylpyrimidine phosphate (HMP-P) moiety of thiamine from aminoimidazole ribotide (AIR) in a radical S-adenosyl-L-methionine (SAM)-dependent reaction. The sequence is that of Phosphomethylpyrimidine synthase from Prochlorococcus marinus (strain NATL2A).